Reading from the N-terminus, the 482-residue chain is Glutamyl-tRNA(Gln) amidotransferase subunit A (482 aa).

Catalysis depends on charge relay system residues K75 and S150. The active-site Acyl-ester intermediate is the S174.

This sequence belongs to the amidase family. GatA subfamily. Heterotrimer of A, B and C subunits.

It carries out the reaction L-glutamyl-tRNA(Gln) + L-glutamine + ATP + H2O = L-glutaminyl-tRNA(Gln) + L-glutamate + ADP + phosphate + H(+). Its function is as follows. Allows the formation of correctly charged Gln-tRNA(Gln) through the transamidation of misacylated Glu-tRNA(Gln) in organisms which lack glutaminyl-tRNA synthetase. The reaction takes place in the presence of glutamine and ATP through an activated gamma-phospho-Glu-tRNA(Gln). The polypeptide is Glutamyl-tRNA(Gln) amidotransferase subunit A (Thermosynechococcus vestitus (strain NIES-2133 / IAM M-273 / BP-1)).